Consider the following 999-residue polypeptide: Embryonic polarity protein dorsal (999 aa).

The tract at residues 1 to 44 (MFPNQNNGAAPGQGPAVDGQQSLNYNGLPAQQQQQLAQSTKNVR) is disordered. An RHD domain is found at 47 to 342 (PYVKITEQPA…TFWNLHRHLK (296 aa)). Serine 312 bears the Phosphoserine; by PKA mark. 2 disordered regions span residues 389-424 (FNHE…EQYT) and 670-851 (QARK…SVSG). A compositionally biased stretch (low complexity) spans 402–424 (EQEQSVQQEQYTQEQSLQQEQYT). A Nuclear export signal motif is present at residues 668–677 (NSQARKPETP). Residues 677–686 (PMRPVPPVPP) are compositionally biased toward pro residues. A compositionally biased stretch (basic and acidic residues) spans 710-719 (KQDSNAENRS). Positions 720-734 (IEANTVQTKPSTGES) are enriched in polar residues. Positions 756–773 (KKPGFFSKLFSRRKSKPD) match the Nuclear localization signal motif. Composition is skewed to low complexity over residues 819–829 (SNPAPAKSSPV) and 836–851 (SKLT…SVSG).

In terms of assembly, interacts with tamo via the nuclear localization signal. Interacts with emb, a component of the nuclear export complex. In terms of tissue distribution, in unchallenged larvae, expression of both isoforms is seen in fat body and gut (isoform A is more abundant). After immune challenge levels of both isoforms are enhanced.

It is found in the cytoplasm. The protein resides in the nucleus. Embryonic developmental transcription factor. The lateral or ventral identity of a cell depends upon the concentration of this protein in its nucleus during the blastoderm stage. Acts as a morphogenetic transcription factor that specifically binds to the kappa-B-related consensus sequence 5'-GRGAAAANCC-3', located in the enhancer region of zygotic genes such as Zen, Twist, Snail and Decapentaplegic, promoting their expression. Part of a signaling pathway involving NF-kappa-B and Toll-related receptors, that functions in the apoptosis of unfit cells during cell competition. Mediates an immune response in larvae. May be part of a NF-kappa-B and Tollo signaling cascade that regulates development of the peripheral nervous system. In Drosophila melanogaster (Fruit fly), this protein is Embryonic polarity protein dorsal (dl).